Consider the following 207-residue polypeptide: Redox-sensing transcriptional repressor Rex (207 aa).

A DNA-binding region (H-T-H motif) is located at residues 17 to 56 (IYLRYLSYLQQVEVTTVSSQQMGKNLDVNPAQIRKDLAAF). 91 to 96 (GAGHLG) is an NAD(+) binding site.

It belongs to the transcriptional regulatory Rex family. Homodimer.

The protein localises to the cytoplasm. Its function is as follows. Modulates transcription in response to changes in cellular NADH/NAD(+) redox state. The protein is Redox-sensing transcriptional repressor Rex of Brevibacillus brevis (strain 47 / JCM 6285 / NBRC 100599).